We begin with the raw amino-acid sequence, 239 residues long: Pimeloyl-[acyl-carrier protein] methyl ester esterase (239 aa).

Residues Trp20, 77–78 (SM), and 138–142 (FISLQ) contribute to the substrate site. The active-site Nucleophile is Ser77. Catalysis depends on residues Asp192 and His220. His220 is a substrate binding site.

This sequence belongs to the AB hydrolase superfamily. Carboxylesterase BioH family. In terms of assembly, monomer.

Its subcellular location is the cytoplasm. The catalysed reaction is 6-carboxyhexanoyl-[ACP] methyl ester + H2O = 6-carboxyhexanoyl-[ACP] + methanol + H(+). It participates in cofactor biosynthesis; biotin biosynthesis. The physiological role of BioH is to remove the methyl group introduced by BioC when the pimeloyl moiety is complete. It allows to synthesize pimeloyl-ACP via the fatty acid synthetic pathway through the hydrolysis of the ester bonds of pimeloyl-ACP esters. In Legionella pneumophila (strain Corby), this protein is Pimeloyl-[acyl-carrier protein] methyl ester esterase.